Consider the following 248-residue polypeptide: tRNA (guanine-N(1)-)-methyltransferase (248 aa).

S-adenosyl-L-methionine is bound by residues Gly-117 and 137-142 (IGDFVL).

It belongs to the RNA methyltransferase TrmD family. In terms of assembly, homodimer.

It is found in the cytoplasm. The catalysed reaction is guanosine(37) in tRNA + S-adenosyl-L-methionine = N(1)-methylguanosine(37) in tRNA + S-adenosyl-L-homocysteine + H(+). Its function is as follows. Specifically methylates guanosine-37 in various tRNAs. This chain is tRNA (guanine-N(1)-)-methyltransferase, found in Polynucleobacter necessarius subsp. necessarius (strain STIR1).